A 151-amino-acid polypeptide reads, in one-letter code: Ribosome-binding factor A (151 aa).

Residues 120 to 151 are disordered; that stretch reads RSPKVVRDLDDTSSDDTSPDANTDTDKETDAE.

Belongs to the RbfA family. Monomer. Binds 30S ribosomal subunits, but not 50S ribosomal subunits or 70S ribosomes.

It is found in the cytoplasm. Functionally, one of several proteins that assist in the late maturation steps of the functional core of the 30S ribosomal subunit. Associates with free 30S ribosomal subunits (but not with 30S subunits that are part of 70S ribosomes or polysomes). Required for efficient processing of 16S rRNA. May interact with the 5'-terminal helix region of 16S rRNA. The sequence is that of Ribosome-binding factor A from Xanthobacter autotrophicus (strain ATCC BAA-1158 / Py2).